The primary structure comprises 234 residues: Uridylate kinase (234 aa).

9–12 is a binding site for ATP; that stretch reads KLSG. Glycine 51 is a binding site for UMP. The ATP site is built by glycine 52 and arginine 56. Residues aspartate 71 and 132 to 139 each bind UMP; that span reads CGNPFFTT. ATP-binding residues include threonine 159, tyrosine 165, and aspartate 168.

The protein belongs to the UMP kinase family. Homohexamer.

It localises to the cytoplasm. The catalysed reaction is UMP + ATP = UDP + ADP. It functions in the pathway pyrimidine metabolism; CTP biosynthesis via de novo pathway; UDP from UMP (UMPK route): step 1/1. Its activity is regulated as follows. Inhibited by UTP. In terms of biological role, catalyzes the reversible phosphorylation of UMP to UDP. The polypeptide is Uridylate kinase (Prochlorococcus marinus (strain MIT 9515)).